The chain runs to 469 residues: MTTKTRFAPSPTGFLHVGGARTALYSWLHARANNGEFVLRIEDTDIERSTQEACDAILDGMNWLGLTWDEGPYYQTKRFDRYNEIIEQMLDKGTAYKCYCSRERIESMREDQAAQGLQQKYDGCCRNLAPRDTDEPFVIRFKNPIEGSVIFDDHVRGRIEISNDMLDDLIIKRTDGVPTYNFCVVVDDWDMGITCVVRGEDHINNTPRQINILKALGAPIPEYAHVSMILGDDGAKLSKRHGAVGVMQYRDDGYLPEALLNYLVRLGWSHGDQEIFSMEELKTLFKLDDINKAASAFNTDKLIWLNQHYIKSLDPVYVASHLQWHMDDQKIDTSNGPALTEIVTALSERAKTLKELAASSRYFYEDFDNFDEAQAKKHLRGVALEPLTLFNQKLSELNDWSVENIHNVIEATATELDVGMGKVGMPLRVAVTGAGQSPALDLTLFLIGKERSAQRISKAIEFVADRINS.

The 'HIGH' region motif lies at 9–19 (PSPTGFLHVGG). The 'KMSKS' region signature appears at 236–240 (KLSKR). An ATP-binding site is contributed by K239.

It belongs to the class-I aminoacyl-tRNA synthetase family. Glutamate--tRNA ligase type 1 subfamily. Monomer.

It localises to the cytoplasm. The enzyme catalyses tRNA(Glu) + L-glutamate + ATP = L-glutamyl-tRNA(Glu) + AMP + diphosphate. Its function is as follows. Catalyzes the attachment of glutamate to tRNA(Glu) in a two-step reaction: glutamate is first activated by ATP to form Glu-AMP and then transferred to the acceptor end of tRNA(Glu). The protein is Glutamate--tRNA ligase of Shewanella frigidimarina (strain NCIMB 400).